Consider the following 152-residue polypeptide: SsrA-binding protein (152 aa).

Belongs to the SmpB family.

The protein resides in the cytoplasm. In terms of biological role, required for rescue of stalled ribosomes mediated by trans-translation. Binds to transfer-messenger RNA (tmRNA), required for stable association of tmRNA with ribosomes. tmRNA and SmpB together mimic tRNA shape, replacing the anticodon stem-loop with SmpB. tmRNA is encoded by the ssrA gene; the 2 termini fold to resemble tRNA(Ala) and it encodes a 'tag peptide', a short internal open reading frame. During trans-translation Ala-aminoacylated tmRNA acts like a tRNA, entering the A-site of stalled ribosomes, displacing the stalled mRNA. The ribosome then switches to translate the ORF on the tmRNA; the nascent peptide is terminated with the 'tag peptide' encoded by the tmRNA and targeted for degradation. The ribosome is freed to recommence translation, which seems to be the essential function of trans-translation. The chain is SsrA-binding protein from Sulfurihydrogenibium sp. (strain YO3AOP1).